We begin with the raw amino-acid sequence, 425 residues long: Alpha-N-acetylgalactosaminidase (425 aa).

Residues 29-30 (NR), glutamate 51, 99-102 (WLTH), 119-120 (EV), and asparagine 148 each bind NAD(+). A substrate-binding site is contributed by tyrosine 177. NAD(+)-binding positions include 194-198 (FHNHW) and tyrosine 211. Substrate-binding positions include 211–214 (YPTH) and tyrosine 293.

Belongs to the Gfo/Idh/MocA family. Glycosyl hydrolase 109 subfamily. NAD(+) serves as cofactor.

The catalysed reaction is Cleavage of non-reducing alpha-(1-&gt;3)-N-acetylgalactosamine residues from human blood group A and AB mucin glycoproteins, Forssman hapten and blood group A lacto series glycolipids.. Functionally, glycosidase that has specific alpha-N-acetylgalactosaminidase activity. The chain is Alpha-N-acetylgalactosaminidase from Bacteroides fragilis (strain ATCC 25285 / DSM 2151 / CCUG 4856 / JCM 11019 / LMG 10263 / NCTC 9343 / Onslow / VPI 2553 / EN-2).